A 100-amino-acid chain; its full sequence is Integration host factor subunit alpha (100 aa).

This sequence belongs to the bacterial histone-like protein family. In terms of assembly, heterodimer of an alpha and a beta chain.

This protein is one of the two subunits of integration host factor, a specific DNA-binding protein that functions in genetic recombination as well as in transcriptional and translational control. This is Integration host factor subunit alpha from Hahella chejuensis (strain KCTC 2396).